The chain runs to 688 residues: NADH-ubiquinone oxidoreductase 75 kDa subunit (688 aa).

Residues 1–85 (MIIRFKINEI…DESIETEIDE (85 aa)) enclose the 2Fe-2S ferredoxin-type domain. [2Fe-2S] cluster-binding residues include cysteine 38, cysteine 49, cysteine 52, and cysteine 66. The 4Fe-4S His(Cys)3-ligated-type domain occupies 85–124 (EILKAREGVMEFLLINHPLDCPICDQGGECDLQEQTLAYG). [4Fe-4S] cluster is bound by residues histidine 101, cysteine 105, cysteine 108, cysteine 114, cysteine 153, cysteine 156, cysteine 159, and cysteine 204. A 4Fe-4S Mo/W bis-MGD-type domain is found at 223–279 (LKNIKGIDIFDTLLTPINYQVKGGEIFRILPRINDRINEEWITDKVRFHYESYKIIE).

It belongs to the complex I 75 kDa subunit family. In terms of assembly, complex I is composed of about 45 different subunits. Requires [2Fe-2S] cluster as cofactor. It depends on [4Fe-4S] cluster as a cofactor.

The protein localises to the mitochondrion inner membrane. The catalysed reaction is a ubiquinone + NADH + 5 H(+)(in) = a ubiquinol + NAD(+) + 4 H(+)(out). Its function is as follows. Core subunit of the mitochondrial membrane respiratory chain NADH dehydrogenase (Complex I) that is believed to belong to the minimal assembly required for catalysis. Complex I functions in the transfer of electrons from NADH to the respiratory chain. The immediate electron acceptor for the enzyme is believed to be ubiquinone. This is the largest subunit of complex I and it is a component of the iron-sulfur (IP) fragment of the enzyme. It may form part of the active site crevice where NADH is oxidized. The protein is NADH-ubiquinone oxidoreductase 75 kDa subunit (nad11) of Dictyostelium discoideum (Social amoeba).